The sequence spans 81 residues: Dermaseptin-B2 (81 aa).

Residues 1–22 (MAFLKKSLFLVLFLGLVSLSIC) form the signal peptide. The propeptide occupies 23–43 (EEEKRENEDEEEQEDDEQSEM). The disordered stretch occupies residues 24 to 46 (EEKRENEDEEEQEDDEQSEMKRG). A compositionally biased stretch (acidic residues) spans 30–40 (EDEEEQEDDEQ). The segment at 54 to 55 (VG) is hinge region that separates the two alpha-helices that constitute the peptide. Valine 78 is subject to Valine amide. A propeptide spanning residues 80–81 (EQ) is cleaved from the precursor.

Post-translationally, amidation permits an increased antimicrobial activity against some microorganisms such as T.album and S.cerevisiae. In terms of processing, may contain a D-amino acid residue, since the natural peptide is not identical in chromatographic properties to the synthetic peptide. As to expression, expressed by the skin glands.

It is found in the secreted. The protein localises to the target cell membrane. Functionally, cationic amphipathic alpha-helical antimicrobial peptide with potent activity against Gram-negative and Gram-positive bacteria, fungi and protozoa. Acts in a synergistic effect in combination with Plasticin-B1 at doses that are not active alone. Acts by disturbing membrane functions. On model membranes, induces a strong perturbation of anionic lipid bilayers, resides at the hydrocarbon core-water interface, parallel to the plane of the membrane, and interacts preferentially with the polar head groups and glycerol backbone region of the anionic phospholipids, as well as the region of the lipid acyl chain near the bilayer surface. Induces a positive curvature of the bilayer and clustering of anionic lipids, consistent with a carpet mechanism, that may lead to the formation of mixed peptide-phospholipid toroidal, transient pores and membrane permeation/disruption once a threshold peptide accumulation is reached. Also enhances binding of agonists to adenosine A1 receptors (ADORA1), adenosine A2a receptors (ADORA2A), alpha-2 adrenergic receptors (ADRA2A) and 5-hydroxytryptamine 1A receptors (HTR1A). In addition, it enhances guanyl nucleotide exchange which may result in the conversion of receptors to a high affinity state complexed with guanyl nucleotide free G-protein. Affects human behavior eliciting profound malaise, followed by listlessness and then euphoria. Does not show cytotoxic activity on CHO cells. Does not act as a chemoattractant. Does not show hemolytic activity. This Phyllomedusa bicolor (Two-colored leaf frog) protein is Dermaseptin-B2 (ADR).